Consider the following 315-residue polypeptide: Ferrochelatase (315 aa).

The Fe cation site is built by histidine 193 and glutamate 273.

Belongs to the ferrochelatase family.

The protein resides in the cytoplasm. The catalysed reaction is heme b + 2 H(+) = protoporphyrin IX + Fe(2+). Its pathway is porphyrin-containing compound metabolism; protoheme biosynthesis; protoheme from protoporphyrin-IX: step 1/1. Catalyzes the ferrous insertion into protoporphyrin IX. The sequence is that of Ferrochelatase from Wolbachia pipientis wMel.